The chain runs to 451 residues: Gamma-aminobutyric acid receptor subunit alpha-2 (451 aa).

The N-terminal stretch at 1–28 (MKTKLNSSNMQLLLFVFLAWDPARLVLA) is a signal peptide. Topologically, residues 29-249 (NIQEDEAKNN…MTAHFHLKRK (221 aa)) are extracellular. N-linked (GlcNAc...) asparagine glycosylation is present at Asn-38. Position 94 (Arg-94) interacts with 4-aminobutanoate. Residue Asn-138 is glycosylated (N-linked (GlcNAc...) asparagine). Thr-157 lines the 4-aminobutanoate pocket. Cys-166 and Cys-180 are oxidised to a cystine. Residue Asn-201 is glycosylated (N-linked (GlcNAc...) asparagine). A helical membrane pass occupies residues 250 to 270 (IGYFVIQTYLPCIMTVILSQV). Residues 271-280 (SFWLNRESVP) lie on the Cytoplasmic side of the membrane. A helical membrane pass occupies residues 281 to 300 (ARTVFGVTTVLTMTTLSISA). The Extracellular portion of the chain corresponds to 301–311 (RNSLPKVAYAT). Residues 312–332 (AMDWFIAVCYAFVFSALIEFA) traverse the membrane as a helical segment. The Cytoplasmic portion of the chain corresponds to 333–420 (TVNYFTKRGW…FNSVSKIDRM (88 aa)). Residues 421-441 (SRIVFPVLFGTFNLVYWATYL) traverse the membrane as a helical segment. Over 442-451 (NREPVLGVSP) the chain is Extracellular.

The protein belongs to the ligand-gated ion channel (TC 1.A.9) family. Gamma-aminobutyric acid receptor (TC 1.A.9.5) subfamily. GABRA2 sub-subfamily. As to quaternary structure, heteropentamer, formed by a combination of alpha (GABRA1-6), beta (GABRB1-3), gamma (GABRG1-3), delta (GABRD), epsilon (GABRE), rho (GABRR1-3), pi (GABRP) and theta (GABRQ) subunits, each subunit exhibiting distinct physiological and pharmacological properties. Interacts with UBQLN1. Interacts with KIF21B. Interacts with LHFPL4. Interacts with SHISA7; interaction leads to the regulation of GABA(A) receptor trafficking, channel deactivation kinetics and pharmacology. In terms of processing, glycosylated.

It is found in the postsynaptic cell membrane. The protein resides in the cell membrane. Its subcellular location is the cytoplasmic vesicle membrane. It localises to the cell projection. The protein localises to the dendrite. It catalyses the reaction chloride(in) = chloride(out). Activated by pentobarbital. Inhibited by the antagonist bicuculline. Alpha subunit of the heteropentameric ligand-gated chloride channel gated by gamma-aminobutyric acid (GABA), a major inhibitory neurotransmitter in the brain. GABA-gated chloride channels, also named GABA(A) receptors (GABAAR), consist of five subunits arranged around a central pore and contain GABA active binding site(s) located at the alpha and beta subunit interface(s). When activated by GABA, GABAARs selectively allow the flow of chloride anions across the cell membrane down their electrochemical gradient. Chloride influx into the postsynaptic neuron following GABAAR opening decreases the neuron ability to generate a new action potential, thereby reducing nerve transmission. The alpha-2 subunit exhibits synaptogenic activity together with beta-2 and very little to no activity together with beta-3, the gamma-2 subunit being necessary but not sufficient to induce rapid synaptic contacts formation. The protein is Gamma-aminobutyric acid receptor subunit alpha-2 (GABRA2) of Bos taurus (Bovine).